Reading from the N-terminus, the 418-residue chain is uncharacterized protein (418 aa).

This is an uncharacterized protein from Invertebrate iridescent virus 6 (IIV-6).